A 138-amino-acid polypeptide reads, in one-letter code: Putative pre-16S rRNA nuclease (138 aa).

Belongs to the YqgF nuclease family.

It is found in the cytoplasm. Functionally, could be a nuclease involved in processing of the 5'-end of pre-16S rRNA. This is Putative pre-16S rRNA nuclease from Listeria monocytogenes serotype 4b (strain CLIP80459).